A 335-amino-acid polypeptide reads, in one-letter code: Anthranilate phosphoribosyltransferase (335 aa).

Residues Gly79, 82-83 (GD), Thr87, 89-92 (NIST), 107-115 (KHCNQGVSS), and Ser119 each bind 5-phospho-alpha-D-ribose 1-diphosphate. Position 79 (Gly79) interacts with anthranilate. Ser91 contributes to the Mg(2+) binding site. Anthranilate is bound at residue Asn110. Arg165 is a binding site for anthranilate. Residues Asp223 and Glu224 each coordinate Mg(2+).

It belongs to the anthranilate phosphoribosyltransferase family. Homodimer. Mg(2+) serves as cofactor.

It catalyses the reaction N-(5-phospho-beta-D-ribosyl)anthranilate + diphosphate = 5-phospho-alpha-D-ribose 1-diphosphate + anthranilate. It functions in the pathway amino-acid biosynthesis; L-tryptophan biosynthesis; L-tryptophan from chorismate: step 2/5. Its function is as follows. Catalyzes the transfer of the phosphoribosyl group of 5-phosphorylribose-1-pyrophosphate (PRPP) to anthranilate to yield N-(5'-phosphoribosyl)-anthranilate (PRA). The protein is Anthranilate phosphoribosyltransferase of Buchnera aphidicola subsp. Diuraphis noxia.